A 1114-amino-acid polypeptide reads, in one-letter code: Proto-oncogene tyrosine-protein kinase receptor Ret (1114 aa).

The first 28 residues, 1–28 (MAKATSGAAGLRLLLLLLLPLLGKVALG), serve as a signal peptide directing secretion. Residues 29 to 153 (LYFSRDAYWE…RVYFSFFNTS (125 aa)) form a cadherin-like region 1 (CLD1) region. Over 29–635 (LYFSRDAYWE…QDPLCDELCR (607 aa)) the chain is Extracellular. N-linked (GlcNAc...) asparagine glycosylation is present at Asn-98. Cys-137 and Cys-142 are disulfide-bonded. An N-linked (GlcNAc...) asparagine glycan is attached at Asn-151. 2 cysteine pairs are disulfide-bonded: Cys-157-Cys-197 and Cys-166-Cys-243. Positions 168-272 (PETRPSFRIR…YDEDDSAPTF (105 aa)) constitute a Cadherin domain. The Ca(2+) site is built by Glu-178 and Asn-179. N-linked (GlcNAc...) asparagine glycosylation is present at Asn-199. Ca(2+) is bound by residues Asp-230, Glu-232, Asp-264, Glu-265, Asp-266, Asp-267, Ser-268, Asp-300, and Asp-302. The cadherin-like region 3 (CLD3) stretch occupies residues 265–379 (EDDSAPTFPA…MQLAVLVNDS (115 aa)). N-linked (GlcNAc...) asparagine glycosylation is found at Asn-336, Asn-343, Asn-361, Asn-367, and Asn-377. Asp-378 is a binding site for Ca(2+). An N-linked (GlcNAc...) asparagine glycan is attached at Asn-394. The interval 405 to 506 (PSTYSLSVSR…QAQLLVTVEG (102 aa)) is cadherin-like region 4 (CLD4). Cys-426 and Cys-430 are joined by a disulfide. 2 N-linked (GlcNAc...) asparagine glycosylation sites follow: Asn-448 and Asn-468. 4 disulfide bridges follow: Cys-449–Cys-478, Cys-515–Cys-531, Cys-519–Cys-541, and Cys-528–Cys-558. Residue Asn-554 is glycosylated (N-linked (GlcNAc...) asparagine). The Ca(2+) site is built by Thr-564, Cys-565, Asp-567, His-569, Glu-574, and Asp-584. Disulfide bonds link Cys-565–Cys-581, Cys-570–Cys-585, Cys-609–Cys-620, Cys-611–Cys-618, and Cys-630–Cys-634. Residues 636–657 (TVIAAAVLFSFIVSVLLSAFCI) form a helical membrane-spanning segment. The Cytoplasmic segment spans residues 658–1114 (HCYHKFAHKP…AAKLMDTFDS (457 aa)). Tyr-687 is subject to Phosphotyrosine; by autocatalysis. A glycan (O-linked (GlcNAc) serine) is linked at Ser-688. Ser-696 is subject to Phosphoserine. The Protein kinase domain maps to 724–1016 (LVLGKTLGEG…KMMVKRRDYL (293 aa)). Residues 730–738 (LGEGEFGKV) and Lys-758 contribute to the ATP site. A semaxanib-binding site is contributed by 805–807 (EYA). Residues Tyr-806, Tyr-809, and Tyr-826 each carry the phosphotyrosine; by autocatalysis modification. The Proton acceptor role is filled by Asp-874. Phosphotyrosine; by autocatalysis occurs at positions 900, 905, 981, 1015, 1029, 1062, 1090, and 1096.

This sequence belongs to the protein kinase superfamily. Tyr protein kinase family. In terms of assembly, phosphorylated form interacts with the PBT domain of DOK2, DOK4 and DOK5. The phosphorylated form interacts with PLCG1 and GRB7. Interacts (not phosphorylated) with PTK2/FAK1 (via FERM domain). Extracellular cell-membrane anchored RET cadherin fragments form complex in neurons with reduced trophic status, preferentially at the contact sites between somas. Interacts with AIP in the pituitary gland; this interaction prevents the formation of the AIP-survivin complex. Interacts (inactive) with CBLC and CD2AP; dissociates upon activation by GDNF which increases CBLC:CD2AP interaction. It depends on Ca(2+) as a cofactor. Post-translationally, autophosphorylated on C-terminal tyrosine residues upon ligand stimulation. In terms of processing, proteolytically cleaved by caspase-3. The soluble RET kinase fragment is able to induce cell death. The extracellular cell-membrane anchored RET cadherin fragment accelerates cell adhesion in sympathetic neurons.

The protein resides in the cell membrane. It is found in the endosome membrane. The catalysed reaction is L-tyrosyl-[protein] + ATP = O-phospho-L-tyrosyl-[protein] + ADP + H(+). Repressed by 4-(3-hydroxyanilino)-quinolines derivatives, indolin-2-one-derivatives, 2-(alkylsulfanyl)-4-(3-thienyl) nicotinonitrile analogs, 3- and 4-substituted beta-carbolin-1-ones, vandetanib, motesanib, sorafenib (BAY 43-9006), cabozantinib (XL184), lenvatinib, sunitinib, nintedanib, and withaferin A (WA). Inactivation by sorafenib both reduces kinase activity and promotes lysosomal degradation. Receptor tyrosine-protein kinase involved in numerous cellular mechanisms including cell proliferation, neuronal navigation, cell migration, and cell differentiation in response to glia cell line-derived growth family factors (GDNF, NRTN, ARTN, PSPN and GDF15). In contrast to most receptor tyrosine kinases, RET requires not only its cognate ligands but also coreceptors, for activation. GDNF ligands (GDNF, NRTN, ARTN, PSPN and GDF15) first bind their corresponding GDNFR coreceptors (GFRA1, GFRA2, GFRA3, GFRA4 and GFRAL, respectively), triggering RET autophosphorylation and activation, leading to activation of downstream signaling pathways, including the MAPK- and AKT-signaling pathways. Acts as a dependence receptor via the GDNF-GFRA1 signaling: in the presence of the ligand GDNF in somatotrophs within pituitary, promotes survival and down regulates growth hormone (GH) production, but triggers apoptosis in absence of GDNF. Required for the molecular mechanisms orchestration during intestine organogenesis via the ARTN-GFRA3 signaling: involved in the development of enteric nervous system and renal organogenesis during embryonic life, and promotes the formation of Peyer's patch-like structures, a major component of the gut-associated lymphoid tissue. Mediates, through interaction with GDF15-receptor GFRAL, GDF15-induced cell-signaling in the brainstem which triggers an aversive response, characterized by nausea, vomiting, and/or loss of appetite in response to various stresses. Modulates cell adhesion via its cleavage by caspase in sympathetic neurons and mediates cell migration in an integrin (e.g. ITGB1 and ITGB3)-dependent manner. Also active in the absence of ligand, triggering apoptosis through a mechanism that requires receptor intracellular caspase cleavage. Triggers the differentiation of rapidly adapting (RA) mechanoreceptors. Involved in the development of the neural crest. Regulates nociceptor survival and size. Phosphorylates PTK2/FAK1. Its function is as follows. Isoform 1 in complex with GFRAL induces higher activation of MAPK-signaling pathway than isoform 2 in complex with GFRAL. This chain is Proto-oncogene tyrosine-protein kinase receptor Ret, found in Homo sapiens (Human).